Consider the following 466-residue polypeptide: Asparagine--tRNA ligase (466 aa).

It belongs to the class-II aminoacyl-tRNA synthetase family. As to quaternary structure, homodimer.

It localises to the cytoplasm. It catalyses the reaction tRNA(Asn) + L-asparagine + ATP = L-asparaginyl-tRNA(Asn) + AMP + diphosphate + H(+). The protein is Asparagine--tRNA ligase of Salmonella paratyphi A (strain ATCC 9150 / SARB42).